An 89-amino-acid polypeptide reads, in one-letter code: Protein YihD (89 aa).

The protein to H.influenzae HI_0845.

The sequence is that of Protein YihD (yihD) from Escherichia coli O157:H7.